The chain runs to 458 residues: NADH-ubiquinone oxidoreductase chain 4 (458 aa).

13 consecutive transmembrane segments (helical) span residues 23 to 43, 59 to 79, 99 to 119, 148 to 168, 174 to 194, 197 to 217, 227 to 247, 260 to 280, 289 to 311, 315 to 337, 355 to 375, 396 to 416, and 438 to 458; these read LLWTATTFFSFLIAALSTLTL, IDQFSCPLIMLSCWLLPLTIM, LLILLQVLLCITFGASNLLMF, LYFLFYTLSASLPLLLALIMI, SLSIYIIPLSNLTLLLNTPWS, LWWIACFLAFLIKMPLYIFHL, PIAGSMILAAILLKLGGYGMI, LAVPFMIIAMWGMIVTSSICL, IAYSSVSHMGLVVAGIFTMTPWA, ALAMMIAHGLVSSGLLCLANITY, FPLMSFWWLMMTFANMALPPF, ILLLGLSMTLTALFSLNMLIM, and LMLMHMAPIILLIANPSAIMI.

Belongs to the complex I subunit 4 family.

It is found in the mitochondrion membrane. The catalysed reaction is a ubiquinone + NADH + 5 H(+)(in) = a ubiquinol + NAD(+) + 4 H(+)(out). Its function is as follows. Core subunit of the mitochondrial membrane respiratory chain NADH dehydrogenase (Complex I) that is believed to belong to the minimal assembly required for catalysis. Complex I functions in the transfer of electrons from NADH to the respiratory chain. The immediate electron acceptor for the enzyme is believed to be ubiquinone. In Petromyzon marinus (Sea lamprey), this protein is NADH-ubiquinone oxidoreductase chain 4 (MT-ND4).